Consider the following 354-residue polypeptide: Guanine nucleotide-binding protein G(i) subunit alpha-1 (354 aa).

Glycine 2 carries the N-myristoyl glycine lipid modification. Residue cysteine 3 is the site of S-palmitoyl cysteine attachment. The 323-residue stretch at 32-354 (REVKLLLLGA…KNNLKDCGLF (323 aa)) folds into the G-alpha domain. The tract at residues 35–48 (KLLLLGAGESGKST) is G1 motif. GTP contacts are provided by residues 43–48 (ESGKST), 150–151 (DS), and 175–178 (LRTR). Serine 47 serves as a coordination point for Mg(2+). The G2 motif stretch occupies residues 173-181 (DVLRTRVKT). Threonine 181 serves as a coordination point for Mg(2+). Residues 196 to 205 (FKMFDVGGQR) form a G3 motif region. GTP-binding positions include 200-204 (DVGGQ), 269-272 (NKKD), and alanine 326. Residues 265–272 (ILFLNKKD) are G4 motif. The G5 motif stretch occupies residues 324–329 (TCATDT).

This sequence belongs to the G-alpha family. G(i/o/t/z) subfamily. In terms of assembly, heterotrimeric G proteins are composed of 3 units; alpha, beta and gamma. The alpha chain contains the guanine nucleotide binding site. Part of a spindle orientation complex. Identified in complex with the beta subunit GNB1 and the gamma subunit GNG1. Identified in complex with the beta subunit GNB1 and the gamma subunit GNG2. GTP binding causes dissociation of the heterotrimer, liberating the individual subunits so that they can interact with downstream effector proteins. Myristoylation at Gly-2 is required for membrane anchoring before palmitoylation. Post-translationally, palmitoylation at Cys-3 varies with membrane lipid composition.

The protein resides in the nucleus. Its subcellular location is the cytoplasm. It localises to the cell membrane. It is found in the cytoskeleton. The protein localises to the microtubule organizing center. The protein resides in the centrosome. Its subcellular location is the cell cortex. It localises to the membrane. The enzyme catalyses GTP + H2O = GDP + phosphate + H(+). Its function is as follows. Guanine nucleotide-binding proteins (G proteins) function as transducers downstream of G protein-coupled receptors (GPCRs) in numerous signaling cascades. The alpha chain contains the guanine nucleotide binding site and alternates between an active, GTP-bound state and an inactive, GDP-bound state. Signaling by an activated GPCR promotes GDP release and GTP binding. The alpha subunit has a low GTPase activity that converts bound GTP to GDP, thereby terminating the signal. Both GDP release and GTP hydrolysis are modulated by numerous regulatory proteins. Signaling is mediated via effector proteins, such as adenylate cyclase. Inhibits adenylate cyclase activity, leading to decreased intracellular cAMP levels. Required for cortical dynein-dynactin complex recruitment during metaphase. This chain is Guanine nucleotide-binding protein G(i) subunit alpha-1 (gnai1), found in Oryzias latipes (Japanese rice fish).